Here is a 241-residue protein sequence, read N- to C-terminus: Small ribosomal subunit protein eS4 (241 aa).

An S4 RNA-binding domain is found at 43–105; it reads IPLVMVLRDI…INKTFRVLQD (63 aa).

It belongs to the eukaryotic ribosomal protein eS4 family.

The chain is Small ribosomal subunit protein eS4 from Methanosphaera stadtmanae (strain ATCC 43021 / DSM 3091 / JCM 11832 / MCB-3).